A 198-amino-acid polypeptide reads, in one-letter code: NAD(P)H dehydrogenase (quinone) (198 aa).

The Flavodoxin-like domain maps to 6–190; that stretch reads ILVLYYSRHG…LCRALGKRLA (185 aa). Residues 12-17, 79-81, 114-120, and histidine 135 each bind FMN; these read SRHGAT, TRF, and STASLHG.

The protein belongs to the WrbA family. Homodimer. Requires FMN as cofactor.

The catalysed reaction is a quinone + NADH + H(+) = a quinol + NAD(+). The enzyme catalyses a quinone + NADPH + H(+) = a quinol + NADP(+). The chain is NAD(P)H dehydrogenase (quinone) from Pseudomonas aeruginosa (strain ATCC 15692 / DSM 22644 / CIP 104116 / JCM 14847 / LMG 12228 / 1C / PRS 101 / PAO1).